Here is a 538-residue protein sequence, read N- to C-terminus: Putative cysteine ligase BshC (538 aa).

A coiled-coil region spans residues 460-484 (KINEQIELLERMLKRNVEKKHEVEL).

It belongs to the BshC family.

Functionally, involved in bacillithiol (BSH) biosynthesis. May catalyze the last step of the pathway, the addition of cysteine to glucosamine malate (GlcN-Mal) to generate BSH. This chain is Putative cysteine ligase BshC, found in Bacillus cereus (strain AH187).